The following is a 159-amino-acid chain: Phosphopantetheine adenylyltransferase (159 aa).

His-16 serves as a coordination point for ATP. Positions 40, 72, and 86 each coordinate substrate. ATP is bound by residues Gly-87–Arg-89, Glu-97, and Tyr-122–Ser-128.

The protein belongs to the bacterial CoaD family. Homohexamer. The cofactor is Mg(2+).

Its subcellular location is the cytoplasm. The catalysed reaction is (R)-4'-phosphopantetheine + ATP + H(+) = 3'-dephospho-CoA + diphosphate. It participates in cofactor biosynthesis; coenzyme A biosynthesis; CoA from (R)-pantothenate: step 4/5. Reversibly transfers an adenylyl group from ATP to 4'-phosphopantetheine, yielding dephospho-CoA (dPCoA) and pyrophosphate. The sequence is that of Phosphopantetheine adenylyltransferase from Dehalococcoides mccartyi (strain ATCC BAA-2100 / JCM 16839 / KCTC 5957 / BAV1).